A 367-amino-acid polypeptide reads, in one-letter code: MTEIIKNTKYLDYTSDSVEFYPFNNNIFVCGTYEIEKGDTEYKERRKGKLYLFEIEEEQQQKENDNNNENNNNNKLFKEIQNINFNSGILDMKWNNNKDRILGVVMSKGELNIYQYDEVEKKLELKSSTEISLSNDILSLSLDWNKSGDKLICSFSDGNIGLFKVTKDYSKVTEEKRWKAHDYEAWICAFNYHDESIVFSGGDDCKFKIWDLNQLLNHNDDDIGIPPTPKFTKRCDMGVTSIHCHPTIENLIAVGSYDECLRIWDLKSLKQPIITTDSLGGGIWRIKWHPFQKNKLVTACMGGGFHILSTDPENINDFSTLQIEQSYNGPHKSIAYGVDWSFNKNNFDKQFIGCCSFYDKCLSIWIP.

WD repeat units lie at residues 84–124 (NFNS…KKLE), 132–173 (SLSN…SKVT), 180–220 (AHDY…NHND), and 234–274 (RCDM…QPII).

It belongs to the DPH7 family.

It catalyses the reaction diphthine methyl ester-[translation elongation factor 2] + H2O = diphthine-[translation elongation factor 2] + methanol + H(+). It participates in protein modification; peptidyl-diphthamide biosynthesis. In terms of biological role, catalyzes the demethylation of diphthine methyl ester to form diphthine, an intermediate diphthamide biosynthesis, a post-translational modification of histidine which occurs in translation elongation factor 2 (efbA). This is Diphthine methyltransferase homolog (wdr85) from Dictyostelium discoideum (Social amoeba).